The primary structure comprises 220 residues: Glycerol-3-phosphate acyltransferase (220 aa).

Transmembrane regions (helical) follow at residues 11 to 31, 70 to 90, 96 to 116, 127 to 147, 153 to 173, and 192 to 212; these read INVI…GYAL, LLVL…SKLF, LQWM…FLNF, GSVV…WFFV, ISSL…FFVP, and PMVL…FNLL.

Belongs to the PlsY family. As to quaternary structure, probably interacts with PlsX.

Its subcellular location is the cell inner membrane. It catalyses the reaction an acyl phosphate + sn-glycerol 3-phosphate = a 1-acyl-sn-glycero-3-phosphate + phosphate. Its pathway is lipid metabolism; phospholipid metabolism. Its function is as follows. Catalyzes the transfer of an acyl group from acyl-phosphate (acyl-PO(4)) to glycerol-3-phosphate (G3P) to form lysophosphatidic acid (LPA). This enzyme utilizes acyl-phosphate as fatty acyl donor, but not acyl-CoA or acyl-ACP. This is Glycerol-3-phosphate acyltransferase from Helicobacter pylori (strain J99 / ATCC 700824) (Campylobacter pylori J99).